The following is a 506-amino-acid chain: 2,3-bisphosphoglycerate-independent phosphoglycerate mutase (506 aa).

Residues Asp13 and Ser63 each coordinate Mn(2+). Ser63 serves as the catalytic Phosphoserine intermediate. Substrate is bound by residues His124, 153-154, Arg183, Arg189, 254-257, and Lys330; these read RD and RADR. 5 residues coordinate Mn(2+): Asp396, His400, Asp437, His438, and His456.

Belongs to the BPG-independent phosphoglycerate mutase family. As to quaternary structure, monomer. Requires Mn(2+) as cofactor.

The enzyme catalyses (2R)-2-phosphoglycerate = (2R)-3-phosphoglycerate. The protein operates within carbohydrate degradation; glycolysis; pyruvate from D-glyceraldehyde 3-phosphate: step 3/5. Functionally, catalyzes the interconversion of 2-phosphoglycerate and 3-phosphoglycerate. The chain is 2,3-bisphosphoglycerate-independent phosphoglycerate mutase from Cereibacter sphaeroides (strain ATCC 17025 / ATH 2.4.3) (Rhodobacter sphaeroides).